A 139-amino-acid polypeptide reads, in one-letter code: Natriuretic peptides A (139 aa).

Positions 1–21 are cleaved as a signal peptide; it reads MTALVLWGLLLLLGQHTQVNS. The propeptide occupies 22 to 114; that stretch reads HVLGRPFSAS…QDLLMSLRKR (93 aa). Cysteines 118 and 134 form a disulfide.

It belongs to the natriuretic peptide family.

The protein localises to the secreted. In terms of biological role, hormone playing a key role in cardiovascular homeostasis through regulation of natriuresis, diuresis, and vasodilation. Has a cGMP-stimulating activity. The polypeptide is Natriuretic peptides A (nppa) (Takifugu rubripes (Japanese pufferfish)).